The sequence spans 386 residues: Alanine racemase 1 (386 aa).

The Proton acceptor; specific for D-alanine role is filled by lysine 38. An N6-(pyridoxal phosphate)lysine modification is found at lysine 38. Arginine 136 is a substrate binding site. Catalysis depends on tyrosine 267, which acts as the Proton acceptor; specific for L-alanine. Methionine 315 is a binding site for substrate.

Belongs to the alanine racemase family. The cofactor is pyridoxal 5'-phosphate.

The enzyme catalyses L-alanine = D-alanine. The protein operates within amino-acid biosynthesis; D-alanine biosynthesis; D-alanine from L-alanine: step 1/1. Catalyzes the interconversion of L-alanine and D-alanine. May also act on other amino acids. This chain is Alanine racemase 1 (alr1), found in Clostridium acetobutylicum (strain ATCC 824 / DSM 792 / JCM 1419 / IAM 19013 / LMG 5710 / NBRC 13948 / NRRL B-527 / VKM B-1787 / 2291 / W).